A 547-amino-acid chain; its full sequence is MRTPDTDEYVGKTIAYKYRVEALIGEGGMGKVFRARQLSLDKVVVLKVLRHTLLSDERTVARFQREAKAASRLNHPNSISVLDFGQAEDGALFIAMEYVAGQDLHQILSREWPLNEGRVVRIVSQVLSALSDAHGAGVIHRDLKPENIMVEPRRNEPDFVKVLDFGIAKITDSTDDGPALTRAGFVCGTPEYMSPEQARGSQLDHRSDLYAVGVILYQLMTGLLPFESDSAVGFATKHLTEEPPPPTRRRPDARISPAMERLILRALSKNPADRPASAEAFKAELQAVDKERRRMDSAPRRSANSSAVLAPLPRKSAASPQSDVRDATLPGWGNEVTMEATVRALPGVLEPLPANADAMAATRETTDSLVHTQPGAGGSSGVAFFFKSLTILLVVAALGFFAYYFFMGAGSGGAQDLPYALPTNAPVPAGANNSAVGASPDVPLYDRAIVSGARNVERALDVAREGDKALQRADVGLAATKYREAFSRSGDPELALKLGEVYWHRQNPDKEEARGWWNRHLREQPASKARALIEQRLNGAVAQPTSP.

One can recognise a Protein kinase domain in the interval 18-288 (YRVEALIGEG…EAFKAELQAV (271 aa)). Residues 24-32 (IGEGGMGKV) and K47 contribute to the ATP site. D142 (proton acceptor) is an active-site residue. Residues 290–299 (KERRRMDSAP) are compositionally biased toward basic and acidic residues. The disordered stretch occupies residues 290-327 (KERRRMDSAPRRSANSSAVLAPLPRKSAASPQSDVRDA).

It belongs to the protein kinase superfamily. Ser/Thr protein kinase family.

The enzyme catalyses L-seryl-[protein] + ATP = O-phospho-L-seryl-[protein] + ADP + H(+). It catalyses the reaction L-threonyl-[protein] + ATP = O-phospho-L-threonyl-[protein] + ADP + H(+). The chain is Serine/threonine-protein kinase pkn3 (pkn3) from Myxococcus xanthus.